Reading from the N-terminus, the 319-residue chain is Ribonuclease Z (319 aa).

Zn(2+) contacts are provided by His62, His64, Asp66, His67, His139, Asp209, and His268. The active-site Proton acceptor is the Asp66.

The protein belongs to the RNase Z family. In terms of assembly, homodimer. Requires Zn(2+) as cofactor.

The enzyme catalyses Endonucleolytic cleavage of RNA, removing extra 3' nucleotides from tRNA precursor, generating 3' termini of tRNAs. A 3'-hydroxy group is left at the tRNA terminus and a 5'-phosphoryl group is left at the trailer molecule.. Functionally, zinc phosphodiesterase, which displays some tRNA 3'-processing endonuclease activity. Probably involved in tRNA maturation, by removing a 3'-trailer from precursor tRNA. This Pseudomonas putida (strain GB-1) protein is Ribonuclease Z.